The chain runs to 315 residues: Glycine--tRNA ligase alpha subunit (315 aa).

This sequence belongs to the class-II aminoacyl-tRNA synthetase family. In terms of assembly, tetramer of two alpha and two beta subunits.

Its subcellular location is the cytoplasm. The catalysed reaction is tRNA(Gly) + glycine + ATP = glycyl-tRNA(Gly) + AMP + diphosphate. This is Glycine--tRNA ligase alpha subunit from Sorangium cellulosum (strain So ce56) (Polyangium cellulosum (strain So ce56)).